We begin with the raw amino-acid sequence, 103 residues long: Large ribosomal subunit protein bL21 (103 aa).

The protein belongs to the bacterial ribosomal protein bL21 family. As to quaternary structure, part of the 50S ribosomal subunit. Contacts protein L20.

This protein binds to 23S rRNA in the presence of protein L20. In Histophilus somni (strain 129Pt) (Haemophilus somnus), this protein is Large ribosomal subunit protein bL21.